The following is a 349-amino-acid chain: 26S proteasome non-ATPase regulatory subunit 4 (349 aa).

One can recognise a VWFA domain in the interval 5 to 188 (ATIVCLDNSE…LSDIILQSPI (184 aa)). Residues 204-223 (DTDPDLAMALKLSLEEEKQR) form the UIM 1 domain. The span at 219-234 (EEKQRQERERKAREEA) shows a compositional bias: basic and acidic residues. Disordered stretches follow at residues 219–257 (EEKQ…MDVN) and 274–349 (TDKM…NEKK). Low complexity predominate over residues 235-253 (NGGSTNSGTTTTTAPTESN). Positions 259–278 (EDDPELAEALALSMATDKME) constitute a UIM 2 domain. Residues 280–301 (QSSTTNTDSQPPQQQQQPPTDD) show a composition bias toward low complexity. Residues 335-349 (LSKKDEDKDKDNEKK) show a composition bias toward basic and acidic residues.

It belongs to the proteasome subunit S5A family. The 26S proteasome is composed of a core protease, known as the 20S proteasome, capped at one or both ends by the 19S regulatory complex (RC). The RC is composed of at least 18 different subunits in two subcomplexes, the base and the lid, which form the portions proximal and distal to the 20S proteolytic core, respectively.

In terms of biological role, binds and presumably selects ubiquitin-conjugates for destruction. The chain is 26S proteasome non-ATPase regulatory subunit 4 (psmD4) from Dictyostelium discoideum (Social amoeba).